A 548-amino-acid chain; its full sequence is 5-epi-aristolochene synthase (548 aa).

(2E,6E)-farnesyl diphosphate-binding residues include R264, D301, D305, R441, and D444. Mg(2+)-binding residues include D301 and D305. A DDXXD motif motif is present at residues 301–305; sequence DDTFD. Residues D444, D445, T448, and E452 each contribute to the Mg(2+) site.

Belongs to the terpene synthase family. In terms of assembly, monomer. The cofactor is Mg(2+). In terms of processing, self-alkylated at Tyr-520 in the presence of (2Z,6E)-farnesyl diphosphate ((Z,E)-FPP). Self-alkylated at Asp-444 at warm temperature (42 degrees Celsius) in the presence of (2E,6E)-farnesyl diphosphate ((E,E)-FPP).

The protein resides in the cytoplasm. It catalyses the reaction (2E,6E)-farnesyl diphosphate = (+)-5-epi-aristolochene + diphosphate. It carries out the reaction (2Z,6E)-farnesyl diphosphate = (+)-2-epi-prezizaene + diphosphate. The enzyme catalyses (2Z,6E)-farnesyl diphosphate = (-)-alpha-cedrene + diphosphate. The catalysed reaction is (2Z,6E)-farnesyl diphosphate = (-)-beta-curcumene + diphosphate. The protein operates within secondary metabolite biosynthesis; terpenoid biosynthesis. Its activity is regulated as follows. Inhibited activity toward farnesyl diphosphate (FPP) by anilinogeranyl diphosphate (AGPP); AGPP undergoes a cyclization event leading to the formation of a novel macrocyclic paracyclophane alkaloid. Repressed by sesquilavandulyl diphosphate (SPP) via the induction of self-alkyation. Functionally, catalyzes the cyclization of trans,trans-farnesyl diphosphate (FPP) to the bicyclic intermediate 5-epi-aristolochene, initial step in the conversion of FPP to the sesquiterpenoid antifungal phytoalexin capsidiol. Produces germacrene A as an enzyme-bound intermediate that is not released by the enzyme, but is further cyclized to produce the bicyclic 5-epi-aristolochene. Mediates, at low levels, the formation of 4-epi-eremophilene and premnaspirodiene from trans,trans-farnesyl diphosphate. Also mediates the conversion of cis,trans-farnesyl diphosphate to cisoid minor products such as (+)-2-epi-prezizaene, (-)-alpha-cedrene and, to a lesser extent, (-)-beta-curcumene; also produces, at low levels, alpha-acoradiene and 4-epi-alpha-acoradiene, but barely nerolidol, alpha-bisabolol, epi-alpha-bisabolol and cis-farnesol. This is 5-epi-aristolochene synthase (EAS3) from Nicotiana tabacum (Common tobacco).